A 468-amino-acid chain; its full sequence is MSHHSSGLRSSISSTSYRRTFGPPPSLSPGAFSYSSSSRFSSSRLLGSGSPSSSARLGSFRAPRAGALRLPSERLDFSMAEALNQEFLATRSNEKQELQELNDRFANFIEKVRFLEQQNAALRGELSQARGQEPARADQLCQQELRELRRELELLGRERDRVQVERDGLAEDLGALKQRLEEETRKREDAEHNLVLFRKDVDDATLSRLELERKIESLMDEIEFLKKLHEEELRDLQVSVESQQVQQVEVEATVKPELTAALRDIRAQYENIAAKNLQEAEEWYKSKYADLSDAANRNHEALRQAKQEMNESRRQIQSLTCEVDGLRGTNEALLRQLRELEEQFALEAGGYQAGAARLEEELRQLKEEMARHLREYQELLNVKMALDIEIATYRKLLEGEESRISVPVHSFASLSLKTTVPEVEPPQDSHSRKMVLIRTIETRDGEKVVTESQKEQHSELDKSSIHSY.

Residues 1-16 (MSHHSSGLRSSISSTS) are compositionally biased toward low complexity. A disordered region spans residues 1-22 (MSHHSSGLRSSISSTSYRRTFG). The head stretch occupies residues 1–96 (MSHHSSGLRS…FLATRSNEKQ (96 aa)). Tyr-17 bears the 3'-nitrotyrosine mark. Phosphoserine is present on residues Ser-28, Ser-50, and Ser-59. Positions 94–404 (EKQELQELND…KLLEGEESRI (311 aa)) constitute an IF rod domain. The tract at residues 97–129 (ELQELNDRFANFIEKVRFLEQQNAALRGELSQA) is coil 1A. Positions 130 to 140 (RGQEPARADQL) are linker 1. The interval 141–236 (CQQELRELRR…KLHEEELRDL (96 aa)) is coil 1B. The segment at 237–259 (QVSVESQQVQQVEVEATVKPELT) is linker 2. A coil 2 region spans residues 260-402 (AALRDIRAQY…YRKLLEGEES (143 aa)). Tyr-376 is subject to 3'-nitrotyrosine. Residues 403 to 468 (RISVPVHSFA…ELDKSSIHSY (66 aa)) form a tail region. The tract at residues 445–468 (GEKVVTESQKEQHSELDKSSIHSY) is disordered. Tyr-468 bears the Phosphotyrosine mark.

This sequence belongs to the intermediate filament family. As to quaternary structure, forms homodimers (in vitro). Homopolymerizes into a filamentous network (in vitro). Forms heterodimers with NEFL, NEFM or NEFH (in vitro). Interacts with DST (via C-terminus). Interacts with RAB7A; the interaction is direct. Interacts with PRKCE (via phorbol-ester/DAG-type 2 domain). In terms of processing, phosphorylated; phosphorylation increases after nerve injury in regenerating neurons. Expressed in hypoglossal motor neurons (at protein level). Expressed in the small and large sensory neurons of the dorsal root ganglion (at protein level). Expressed in cutaneous and muscular sensory neurons.

It localises to the cytoplasm. The protein resides in the cytoskeleton. The protein localises to the cell projection. Its subcellular location is the axon. It is found in the perikaryon. Class-III neuronal intermediate filament protein. My form an independent structural network without the involvement of other neurofilaments or may cooperate with the neuronal intermediate filament proteins NEFL, NEFH, NEFM and INA to form a filamentous network. Assembly of the neuronal intermediate filaments may be regulated by RAB7A. Plays a role in the development of unmyelinated sensory neurons. May be involved in axon elongation and axon regeneration after injury. Inhibits neurite extension in type II spiral ganglion neurons in the cochlea. The sequence is that of Peripherin (Prph) from Rattus norvegicus (Rat).